A 256-amino-acid chain; its full sequence is Imidazole glycerol phosphate synthase subunit hisF1 (256 aa).

Catalysis depends on residues D11 and D130.

This sequence belongs to the HisA/HisF family. Heterodimer of HisH and HisF.

The protein resides in the cytoplasm. The catalysed reaction is 5-[(5-phospho-1-deoxy-D-ribulos-1-ylimino)methylamino]-1-(5-phospho-beta-D-ribosyl)imidazole-4-carboxamide + L-glutamine = D-erythro-1-(imidazol-4-yl)glycerol 3-phosphate + 5-amino-1-(5-phospho-beta-D-ribosyl)imidazole-4-carboxamide + L-glutamate + H(+). The protein operates within amino-acid biosynthesis; L-histidine biosynthesis; L-histidine from 5-phospho-alpha-D-ribose 1-diphosphate: step 5/9. Functionally, IGPS catalyzes the conversion of PRFAR and glutamine to IGP, AICAR and glutamate. The HisF subunit catalyzes the cyclization activity that produces IGP and AICAR from PRFAR using the ammonia provided by the HisH subunit. The protein is Imidazole glycerol phosphate synthase subunit hisF1 (hisF1) of Parasynechococcus marenigrum (strain WH8102).